We begin with the raw amino-acid sequence, 138 residues long: Large ribosomal subunit protein uL16c (138 aa).

This sequence belongs to the universal ribosomal protein uL16 family. Part of the 50S ribosomal subunit.

It localises to the plastid. The protein localises to the chloroplast. The protein is Large ribosomal subunit protein uL16c of Chaetosphaeridium globosum (Charophycean green alga).